Here is a 38-residue protein sequence, read N- to C-terminus: Photosystem II reaction center protein L (38 aa).

Residues serine 17 to phenylalanine 37 form a helical membrane-spanning segment.

This sequence belongs to the PsbL family. As to quaternary structure, PSII is composed of 1 copy each of membrane proteins PsbA, PsbB, PsbC, PsbD, PsbE, PsbF, PsbH, PsbI, PsbJ, PsbK, PsbL, PsbM, PsbT, PsbX, PsbY, PsbZ, Psb30/Ycf12, at least 3 peripheral proteins of the oxygen-evolving complex and a large number of cofactors. It forms dimeric complexes.

The protein localises to the plastid. The protein resides in the chloroplast thylakoid membrane. One of the components of the core complex of photosystem II (PSII). PSII is a light-driven water:plastoquinone oxidoreductase that uses light energy to abstract electrons from H(2)O, generating O(2) and a proton gradient subsequently used for ATP formation. It consists of a core antenna complex that captures photons, and an electron transfer chain that converts photonic excitation into a charge separation. This subunit is found at the monomer-monomer interface and is required for correct PSII assembly and/or dimerization. This chain is Photosystem II reaction center protein L, found in Psilotum nudum (Whisk fern).